A 200-amino-acid chain; its full sequence is Small ribosomal subunit protein uS4c (200 aa).

Residues 91–154 (MRLDNVVFRL…NSRKMVTEAN (64 aa)) enclose the S4 RNA-binding domain.

This sequence belongs to the universal ribosomal protein uS4 family. In terms of assembly, part of the 30S ribosomal subunit. Contacts protein S5. The interaction surface between S4 and S5 is involved in control of translational fidelity.

The protein localises to the plastid. The protein resides in the chloroplast. One of the primary rRNA binding proteins, it binds directly to 16S rRNA where it nucleates assembly of the body of the 30S subunit. Functionally, with S5 and S12 plays an important role in translational accuracy. The protein is Small ribosomal subunit protein uS4c (rps4) of Oltmannsiellopsis viridis (Marine flagellate).